A 272-amino-acid polypeptide reads, in one-letter code: Proteasome assembly chaperone 1 (272 aa).

This sequence belongs to the PSMG1 family. Forms a heterodimer with psmg2.

In terms of biological role, chaperone protein which promotes assembly of the 20S proteasome as part of a heterodimer with psmg2. This chain is Proteasome assembly chaperone 1 (psmG1), found in Dictyostelium discoideum (Social amoeba).